Here is a 143-residue protein sequence, read N- to C-terminus: Large-conductance mechanosensitive channel (143 aa).

Helical transmembrane passes span 16–36 (VIDL…VTAL) and 84–104 (INTV…VKLI).

This sequence belongs to the MscL family. In terms of assembly, homopentamer.

It localises to the cell inner membrane. In terms of biological role, channel that opens in response to stretch forces in the membrane lipid bilayer. May participate in the regulation of osmotic pressure changes within the cell. The polypeptide is Large-conductance mechanosensitive channel (Xanthomonas axonopodis pv. citri (strain 306)).